Here is a 216-residue protein sequence, read N- to C-terminus: Translation initiation factor 6 (216 aa).

This sequence belongs to the eIF-6 family.

Binds to the 50S ribosomal subunit and prevents its association with the 30S ribosomal subunit to form the 70S initiation complex. In Thermoplasma acidophilum (strain ATCC 25905 / DSM 1728 / JCM 9062 / NBRC 15155 / AMRC-C165), this protein is Translation initiation factor 6.